A 317-amino-acid chain; its full sequence is tRNA(Met) cytidine acetate ligase (317 aa).

Residues 6–19, G100, N157, and R182 contribute to the ATP site; that span reads IAEY…HIYQ.

This sequence belongs to the TmcAL family.

It localises to the cytoplasm. The enzyme catalyses cytidine(34) in elongator tRNA(Met) + acetate + ATP = N(4)-acetylcytidine(34) in elongator tRNA(Met) + AMP + diphosphate. Catalyzes the formation of N(4)-acetylcytidine (ac(4)C) at the wobble position of elongator tRNA(Met), using acetate and ATP as substrates. First activates an acetate ion to form acetyladenylate (Ac-AMP) and then transfers the acetyl group to tRNA to form ac(4)C34. This Mesomycoplasma hyopneumoniae (strain J / ATCC 25934 / NCTC 10110) (Mycoplasma hyopneumoniae) protein is tRNA(Met) cytidine acetate ligase.